The sequence spans 114 residues: Non-specific lipid-transfer protein 2 (114 aa).

The first 23 residues, 1 to 23, serve as a signal peptide directing secretion; it reads MEMVNKIACFVLLCMVVVAPHAE. 4 disulfide bridges follow: cysteine 27-cysteine 73, cysteine 37-cysteine 50, cysteine 51-cysteine 96, and cysteine 71-cysteine 110.

It belongs to the plant LTP family.

Functionally, plant non-specific lipid-transfer proteins transfer phospholipids as well as galactolipids across membranes. May play a role in wax or cutin deposition in the cell walls of expanding epidermal cells and certain secretory tissues. The polypeptide is Non-specific lipid-transfer protein 2 (Solanum chilense (Tomato)).